A 311-amino-acid polypeptide reads, in one-letter code: Aspartate carbamoyltransferase catalytic subunit (311 aa).

Positions 55 and 56 each coordinate carbamoyl phosphate. Lys-85 serves as a coordination point for L-aspartate. Carbamoyl phosphate is bound by residues Arg-106, His-135, and Gln-138. Positions 168 and 230 each coordinate L-aspartate. Residues Leu-268 and Pro-269 each coordinate carbamoyl phosphate.

This sequence belongs to the aspartate/ornithine carbamoyltransferase superfamily. ATCase family. Heterododecamer (2C3:3R2) of six catalytic PyrB chains organized as two trimers (C3), and six regulatory PyrI chains organized as three dimers (R2).

The catalysed reaction is carbamoyl phosphate + L-aspartate = N-carbamoyl-L-aspartate + phosphate + H(+). The protein operates within pyrimidine metabolism; UMP biosynthesis via de novo pathway; (S)-dihydroorotate from bicarbonate: step 2/3. Functionally, catalyzes the condensation of carbamoyl phosphate and aspartate to form carbamoyl aspartate and inorganic phosphate, the committed step in the de novo pyrimidine nucleotide biosynthesis pathway. This Baumannia cicadellinicola subsp. Homalodisca coagulata protein is Aspartate carbamoyltransferase catalytic subunit.